Here is a 242-residue protein sequence, read N- to C-terminus: tRNA pseudouridine synthase A (242 aa).

Asp51 serves as the catalytic Nucleophile. Tyr107 lines the substrate pocket.

The protein belongs to the tRNA pseudouridine synthase TruA family. In terms of assembly, homodimer.

It catalyses the reaction uridine(38/39/40) in tRNA = pseudouridine(38/39/40) in tRNA. Its function is as follows. Formation of pseudouridine at positions 38, 39 and 40 in the anticodon stem and loop of transfer RNAs. In Helicobacter acinonychis (strain Sheeba), this protein is tRNA pseudouridine synthase A.